The following is a 456-amino-acid chain: tRNA-2-methylthio-N(6)-dimethylallyladenosine synthase (456 aa).

Positions arginine 13 to arginine 129 constitute an MTTase N-terminal domain. Residues cysteine 22, cysteine 58, cysteine 92, cysteine 168, cysteine 172, and cysteine 175 each coordinate [4Fe-4S] cluster. Residues glycine 154–glutamine 384 enclose the Radical SAM core domain. One can recognise a TRAM domain in the interval leucine 387 to serine 450.

This sequence belongs to the methylthiotransferase family. MiaB subfamily. In terms of assembly, monomer. Requires [4Fe-4S] cluster as cofactor.

It is found in the cytoplasm. It catalyses the reaction N(6)-dimethylallyladenosine(37) in tRNA + (sulfur carrier)-SH + AH2 + 2 S-adenosyl-L-methionine = 2-methylsulfanyl-N(6)-dimethylallyladenosine(37) in tRNA + (sulfur carrier)-H + 5'-deoxyadenosine + L-methionine + A + S-adenosyl-L-homocysteine + 2 H(+). Catalyzes the methylthiolation of N6-(dimethylallyl)adenosine (i(6)A), leading to the formation of 2-methylthio-N6-(dimethylallyl)adenosine (ms(2)i(6)A) at position 37 in tRNAs that read codons beginning with uridine. The protein is tRNA-2-methylthio-N(6)-dimethylallyladenosine synthase of Syntrophobacter fumaroxidans (strain DSM 10017 / MPOB).